The following is a 297-amino-acid chain: Halorhodopsin (297 aa).

Positions Met1–Asp31 are disordered. Over Met1–Thr45 the chain is Extracellular. A helical membrane pass occupies residues Asp46 to Ala71. Residues Arg72 to Asn77 are Cytoplasmic-facing. The helical transmembrane segment at Arg78 to Val101 threads the bilayer. Residues Thr102 to Gln125 lie on the Extracellular side of the membrane. Residues Trp126 to Ala147 traverse the membrane as a helical segment. Residues Glu148–Asp150 lie on the Cytoplasmic side of the membrane. Residues Thr151–Thr174 traverse the membrane as a helical segment. Over Thr175–Ser177 the chain is Extracellular. Residues Tyr178 to Leu200 traverse the membrane as a helical segment. Residues Ala201–Thr212 lie on the Cytoplasmic side of the membrane. The helical transmembrane segment at Gly213–Leu236 threads the bilayer. Topologically, residues Gly237–Ser246 are extracellular. Residues Val247–Asn275 form a helical membrane-spanning segment. Lys262 is subject to N6-(retinylidene)lysine. The Cytoplasmic portion of the chain corresponds to Asn276 to Asp297.

It belongs to the archaeal/bacterial/fungal opsin family.

The protein localises to the cell membrane. Functionally, light-driven chloride pump. The sequence is that of Halorhodopsin (hop) from Haloterrigena sp. (strain arg-4).